A 135-amino-acid polypeptide reads, in one-letter code: Large ribosomal subunit protein bL21 (135 aa).

The tract at residues 85-135 is disordered; that stretch reads YRVKRGHRQQYTQIEIESLNANGPASSDDEEAAETSDAEPDEDPEAEPAEA. The segment covering 93–107 has biased composition (polar residues); that stretch reads QQYTQIEIESLNANG. The span at 111 to 135 shows a compositional bias: acidic residues; the sequence is SDDEEAAETSDAEPDEDPEAEPAEA.

The protein belongs to the bacterial ribosomal protein bL21 family. Part of the 50S ribosomal subunit. Contacts protein L20.

This protein binds to 23S rRNA in the presence of protein L20. This is Large ribosomal subunit protein bL21 from Salinibacter ruber (strain DSM 13855 / M31).